The sequence spans 346 residues: 3-isopropylmalate dehydrogenase (346 aa).

An NAD(+)-binding site is contributed by 76–87 (GPKWTDPNNRPE). 4 residues coordinate substrate: R94, R104, R132, and D217. 3 residues coordinate Mg(2+): D217, D241, and D245. An NAD(+)-binding site is contributed by 275–287 (GSAPDIANQDIAN).

Belongs to the isocitrate and isopropylmalate dehydrogenases family. LeuB type 1 subfamily. Homodimer. Requires Mg(2+) as cofactor. Mn(2+) is required as a cofactor.

Its subcellular location is the cytoplasm. The enzyme catalyses (2R,3S)-3-isopropylmalate + NAD(+) = 4-methyl-2-oxopentanoate + CO2 + NADH. The protein operates within amino-acid biosynthesis; L-leucine biosynthesis; L-leucine from 3-methyl-2-oxobutanoate: step 3/4. Its function is as follows. Catalyzes the oxidation of 3-carboxy-2-hydroxy-4-methylpentanoate (3-isopropylmalate) to 3-carboxy-4-methyl-2-oxopentanoate. The product decarboxylates to 4-methyl-2 oxopentanoate. In Staphylococcus saprophyticus subsp. saprophyticus (strain ATCC 15305 / DSM 20229 / NCIMB 8711 / NCTC 7292 / S-41), this protein is 3-isopropylmalate dehydrogenase.